Consider the following 1068-residue polypeptide: Carbamoyl phosphate synthase large chain (1068 aa).

Residues 1 to 401 (MPRNNDIKKV…ALMKAIRSLE (401 aa)) form a carboxyphosphate synthetic domain region. Residues Arg-129, Arg-169, Gly-175, Gly-176, Arg-208, Ile-210, Glu-215, Gly-241, Val-242, His-243, Gln-284, and Glu-298 each coordinate ATP. An ATP-grasp 1 domain is found at 133–327 (KDTMEKIGEP…IAKVTAKIAL (195 aa)). Gln-284, Glu-298, and Asn-300 together coordinate Mg(2+). Residues Gln-284, Glu-298, and Asn-300 each coordinate Mn(2+). Positions 402–546 (QHVDSLMSYD…YSVFGSENEA (145 aa)) are oligomerization domain. Residues 547–930 (AETNPQKKVL…ALYKAFEGAG (384 aa)) are carbamoyl phosphate synthetic domain. Positions 672–862 (DEILQKTGIP…IVDLAARIIM (191 aa)) constitute an ATP-grasp 2 domain. ATP is bound by residues Arg-708, Lys-747, Leu-749, Glu-753, Gly-778, Val-779, His-780, Ser-781, Gln-821, and Glu-833. Mg(2+) contacts are provided by Gln-821, Glu-833, and Asn-835. Residues Gln-821, Glu-833, and Asn-835 each contribute to the Mn(2+) site. The region spanning 931–1068 (VELPKYKQMI…PVDIATVKNL (138 aa)) is the MGS-like domain. The segment at 931–1068 (VELPKYKQMI…PVDIATVKNL (138 aa)) is allosteric domain.

Belongs to the CarB family. Composed of two chains; the small (or glutamine) chain promotes the hydrolysis of glutamine to ammonia, which is used by the large (or ammonia) chain to synthesize carbamoyl phosphate. Tetramer of heterodimers (alpha,beta)4. It depends on Mg(2+) as a cofactor. Mn(2+) serves as cofactor.

It carries out the reaction hydrogencarbonate + L-glutamine + 2 ATP + H2O = carbamoyl phosphate + L-glutamate + 2 ADP + phosphate + 2 H(+). It catalyses the reaction hydrogencarbonate + NH4(+) + 2 ATP = carbamoyl phosphate + 2 ADP + phosphate + 2 H(+). It functions in the pathway amino-acid biosynthesis; L-arginine biosynthesis; carbamoyl phosphate from bicarbonate: step 1/1. Its pathway is pyrimidine metabolism; UMP biosynthesis via de novo pathway; (S)-dihydroorotate from bicarbonate: step 1/3. Functionally, large subunit of the glutamine-dependent carbamoyl phosphate synthetase (CPSase). CPSase catalyzes the formation of carbamoyl phosphate from the ammonia moiety of glutamine, carbonate, and phosphate donated by ATP, constituting the first step of 2 biosynthetic pathways, one leading to arginine and/or urea and the other to pyrimidine nucleotides. The large subunit (synthetase) binds the substrates ammonia (free or transferred from glutamine from the small subunit), hydrogencarbonate and ATP and carries out an ATP-coupled ligase reaction, activating hydrogencarbonate by forming carboxy phosphate which reacts with ammonia to form carbamoyl phosphate. The sequence is that of Carbamoyl phosphate synthase large chain from Agathobacter rectalis (strain ATCC 33656 / DSM 3377 / JCM 17463 / KCTC 5835 / VPI 0990) (Eubacterium rectale).